We begin with the raw amino-acid sequence, 703 residues long: Arf-GAP with GTPase, ANK repeat and PH domain-containing protein 9 (703 aa).

Disordered regions lie at residues 249-287 (KRNGGGSLNNYSSSIPPTPSTSQEDPQFSVPPTANTPTP), 299-323 (FTSEKGSDPDKERKAPENHADTIGS), and 427-449 (SSTTSPKLNPPPSPHANKKKHLK). Residues 271-286 (QEDPQFSVPPTANTPT) show a composition bias toward polar residues. A compositionally biased stretch (basic and acidic residues) spans 303 to 318 (KGSDPDKERKAPENHA). One can recognise a PH domain in the interval 327–488 (IPIKQGMLLK…WVQAIQSQIL (162 aa)). Residues 509–629 (AMALQSIQNM…LFLAPLPCTE (121 aa)) enclose the Arf-GAP domain. Residues 524–547 (CVDCETQNPKWASLNLGVLMCIEC) form a C4-type zinc finger. An ANK repeat occupies 631–700 (SLGQQLLRAT…WTSWPEMPTG (70 aa)).

It belongs to the centaurin gamma-like family.

In terms of biological role, putative GTPase-activating protein. In Homo sapiens (Human), this protein is Arf-GAP with GTPase, ANK repeat and PH domain-containing protein 9 (AGAP9).